Reading from the N-terminus, the 138-residue chain is Translation initiation factor 2 subunit beta (138 aa).

Belongs to the eIF-2-beta/eIF-5 family. Heterotrimer composed of an alpha, a beta and a gamma chain.

EIF-2 functions in the early steps of protein synthesis by forming a ternary complex with GTP and initiator tRNA. This is Translation initiation factor 2 subunit beta from Methanococcus vannielii (strain ATCC 35089 / DSM 1224 / JCM 13029 / OCM 148 / SB).